A 378-amino-acid chain; its full sequence is Putative glutamate--cysteine ligase 2 (378 aa).

It belongs to the glutamate--cysteine ligase type 2 family. YbdK subfamily.

The catalysed reaction is L-cysteine + L-glutamate + ATP = gamma-L-glutamyl-L-cysteine + ADP + phosphate + H(+). In terms of biological role, ATP-dependent carboxylate-amine ligase which exhibits weak glutamate--cysteine ligase activity. This is Putative glutamate--cysteine ligase 2 from Jannaschia sp. (strain CCS1).